We begin with the raw amino-acid sequence, 475 residues long: Sulfate adenylyltransferase subunit 1 (475 aa).

Residues 25-239 enclose the tr-type G domain; sequence KSLLRFLTCG…EVLETVEIQR (215 aa). The G1 stretch occupies residues 34–41; that stretch reads GSVDDGKS. 34 to 41 provides a ligand contact to GTP; it reads GSVDDGKS. The G2 stretch occupies residues 92–96; the sequence is GITID. The segment at 113–116 is G3; that stretch reads DTPG. Residues 113 to 117 and 168 to 171 each bind GTP; these read DTPGH and NKMD. The G4 stretch occupies residues 168–171; that stretch reads NKMD. A G5 region spans residues 206–208; it reads SAL.

Belongs to the TRAFAC class translation factor GTPase superfamily. Classic translation factor GTPase family. CysN/NodQ subfamily. As to quaternary structure, heterodimer composed of CysD, the smaller subunit, and CysN.

The enzyme catalyses sulfate + ATP + H(+) = adenosine 5'-phosphosulfate + diphosphate. The protein operates within sulfur metabolism; hydrogen sulfide biosynthesis; sulfite from sulfate: step 1/3. Its function is as follows. With CysD forms the ATP sulfurylase (ATPS) that catalyzes the adenylation of sulfate producing adenosine 5'-phosphosulfate (APS) and diphosphate, the first enzymatic step in sulfur assimilation pathway. APS synthesis involves the formation of a high-energy phosphoric-sulfuric acid anhydride bond driven by GTP hydrolysis by CysN coupled to ATP hydrolysis by CysD. The chain is Sulfate adenylyltransferase subunit 1 from Escherichia coli (strain 55989 / EAEC).